Here is a 609-residue protein sequence, read N- to C-terminus: Glutamine--fructose-6-phosphate aminotransferase [isomerizing] (609 aa).

Catalysis depends on C2, which acts as the Nucleophile; for GATase activity. A Glutamine amidotransferase type-2 domain is found at 2-219 (CGIVAAVTQR…EGDIAIVARK (218 aa)). 2 consecutive SIS domains span residues 288–428 (ENNI…SKKE) and 460–599 (MANT…IDQP). K604 functions as the For Fru-6P isomerization activity in the catalytic mechanism.

Homodimer.

Its subcellular location is the cytoplasm. It carries out the reaction D-fructose 6-phosphate + L-glutamine = D-glucosamine 6-phosphate + L-glutamate. Catalyzes the first step in hexosamine metabolism, converting fructose-6P into glucosamine-6P using glutamine as a nitrogen source. The chain is Glutamine--fructose-6-phosphate aminotransferase [isomerizing] from Buchnera aphidicola subsp. Acyrthosiphon pisum (strain APS) (Acyrthosiphon pisum symbiotic bacterium).